A 197-amino-acid polypeptide reads, in one-letter code: MFLGGTISTPPASLRLRSTLNPQNAVTQSSSQATFPAAMQRKPPSYSISDEDLESRGFLLRRTTEGLNLDQLNSVFAAVGFPRRDTAKIEVALQHTDALLWVEYEKTRRPVAFARATGDGVFNAIIWDVVVDPSFQSCGLGKAVMERLIEDLQVKGICNIALYSEPRVLGFYRPLGFVSDPDGIKGMVFIRKQRNKK.

The transit peptide at 1–37 (MFLGGTISTPPASLRLRSTLNPQNAVTQSSSQATFPA) directs the protein to the chloroplast. Polar residues predominate over residues 23–34 (QNAVTQSSSQAT). Residues 23–46 (QNAVTQSSSQATFPAAMQRKPPSY) are disordered. In terms of domain architecture, N-acetyltransferase spans 58–195 (FLLRRTTEGL…GMVFIRKQRN (138 aa)). Acetyl-CoA contacts are provided by residues 129-131 (VVV), 137-142 (SCGLGK), 165-167 (EPR), and Tyr-172. Tyr-172 serves as the catalytic Proton donor.

This sequence belongs to the acetyltransferase family. GNAT subfamily. As to quaternary structure, oligomer. In terms of processing, autoacetylated. In terms of tissue distribution, expressed in green tissues. Accumulates mainly in flowers and young leaves, and, to a lower extent, in stems and mature leaves, but barely in roots.

Its subcellular location is the plastid. It is found in the chloroplast. It carries out the reaction an N-terminal L-alpha-aminoacyl-[protein] + acetyl-CoA = N-terminal N(alpha)-acetyl-L-alpha-aminoacyl-[protein] + CoA + H(+). The enzyme catalyses L-lysyl-[protein] + acetyl-CoA = N(6)-acetyl-L-lysyl-[protein] + CoA + H(+). It catalyses the reaction 5-methoxytryptamine + acetyl-CoA = melatonin + CoA + H(+). The catalysed reaction is serotonin + acetyl-CoA = N-acetylserotonin + CoA + H(+). Its activity is regulated as follows. Inhibited by 5-methoxytryptamine in vitro. In terms of biological role, protein acetyltransferase with dual specificity triggering both N-alpha-acetylation (NTA) and epsilon-lysine acetylation (KA), possibly with a low efficiency or toward specific plastid substrates. Involved in melatonin biosynthesis by catalyzing the formation of N-acetylserotonin (NAS) from serotonin and of melatonin (N-acetyl-5-methoxytryptamine) from 5-methoxytryptamine (5-MT). This is GCN5-related N-acetyltransferase 1, chloroplastic from Arabidopsis thaliana (Mouse-ear cress).